Reading from the N-terminus, the 162-residue chain is Ubiquitin-fold modifier-conjugating enzyme 1 (162 aa).

The active-site Glycyl thioester intermediate is the C115.

This sequence belongs to the ubiquitin-conjugating enzyme family. UFC1 subfamily. In terms of assembly, interacts with uba-5.

Its function is as follows. E2-like enzyme which forms an intermediate with ufm-1. The intermediate is formed via a thioester linkage. This is Ubiquitin-fold modifier-conjugating enzyme 1 from Caenorhabditis briggsae.